A 128-amino-acid polypeptide reads, in one-letter code: Small nuclear ribonucleoprotein SmD3a (128 aa).

In terms of domain architecture, Sm spans 7–79; it reads IPVKLLHESS…VRFLVIPDML (73 aa). Residues 90–128 form a disordered region; sequence GKGKSASLGVGRGRGAAMRAKGTGRGTGGGRGAVPPVRR. Over residues 112–121 the composition is skewed to gly residues; it reads TGRGTGGGRG.

This sequence belongs to the snRNP core protein family. Expressed in young seedlings, roots, leaves, flowers and immature siliques.

The protein resides in the cytoplasm. It localises to the cytosol. It is found in the nucleus. Functionally, core component of the spliceosomal U1, U2, U4 and U5 small nuclear ribonucleoproteins (snRNPs), the building blocks of the spliceosome. May play a minor role in the splicing of cellular pre-mRNAs. The polypeptide is Small nuclear ribonucleoprotein SmD3a (Arabidopsis thaliana (Mouse-ear cress)).